The chain runs to 200 residues: Large ribosomal subunit protein uL4 (200 aa).

Residues 38-68 form a disordered region; that stretch reads GRQGSKQQKTRSDVRGGGKRPWRQKGTGRAR. Over residues 54–65 the composition is skewed to basic residues; it reads GGKRPWRQKGTG.

Belongs to the universal ribosomal protein uL4 family. As to quaternary structure, part of the 50S ribosomal subunit.

In terms of biological role, one of the primary rRNA binding proteins, this protein initially binds near the 5'-end of the 23S rRNA. It is important during the early stages of 50S assembly. It makes multiple contacts with different domains of the 23S rRNA in the assembled 50S subunit and ribosome. Its function is as follows. Forms part of the polypeptide exit tunnel. This is Large ribosomal subunit protein uL4 from Pseudomonas fluorescens (strain Pf0-1).